The chain runs to 338 residues: Ketol-acid reductoisomerase (NADP(+)) (338 aa).

Residues 1-181 (MNVYYDKDCD…GGGRSGIIET (181 aa)) form the KARI N-terminal Rossmann domain. Residues 24-27 (YGSQ), arginine 47, serine 50, serine 52, and 82-85 (DEFQ) each bind NADP(+). Histidine 107 is a catalytic residue. Residue glycine 133 participates in NADP(+) binding. The KARI C-terminal knotted domain maps to 182 to 327 (TFKDETETDL…AKLRGMMPWI (146 aa)). Residues aspartate 190, glutamate 194, glutamate 226, and glutamate 230 each contribute to the Mg(2+) site. Serine 251 contacts substrate.

This sequence belongs to the ketol-acid reductoisomerase family. The cofactor is Mg(2+).

It catalyses the reaction (2R)-2,3-dihydroxy-3-methylbutanoate + NADP(+) = (2S)-2-acetolactate + NADPH + H(+). The enzyme catalyses (2R,3R)-2,3-dihydroxy-3-methylpentanoate + NADP(+) = (S)-2-ethyl-2-hydroxy-3-oxobutanoate + NADPH + H(+). It functions in the pathway amino-acid biosynthesis; L-isoleucine biosynthesis; L-isoleucine from 2-oxobutanoate: step 2/4. The protein operates within amino-acid biosynthesis; L-valine biosynthesis; L-valine from pyruvate: step 2/4. In terms of biological role, involved in the biosynthesis of branched-chain amino acids (BCAA). Catalyzes an alkyl-migration followed by a ketol-acid reduction of (S)-2-acetolactate (S2AL) to yield (R)-2,3-dihydroxy-isovalerate. In the isomerase reaction, S2AL is rearranged via a Mg-dependent methyl migration to produce 3-hydroxy-3-methyl-2-ketobutyrate (HMKB). In the reductase reaction, this 2-ketoacid undergoes a metal-dependent reduction by NADPH to yield (R)-2,3-dihydroxy-isovalerate. The sequence is that of Ketol-acid reductoisomerase (NADP(+)) from Psychrobacter arcticus (strain DSM 17307 / VKM B-2377 / 273-4).